The following is a 416-amino-acid chain: Exodeoxyribonuclease 7 large subunit (416 aa).

Belongs to the XseA family. Heterooligomer composed of large and small subunits.

Its subcellular location is the cytoplasm. It catalyses the reaction Exonucleolytic cleavage in either 5'- to 3'- or 3'- to 5'-direction to yield nucleoside 5'-phosphates.. Functionally, bidirectionally degrades single-stranded DNA into large acid-insoluble oligonucleotides, which are then degraded further into small acid-soluble oligonucleotides. The polypeptide is Exodeoxyribonuclease 7 large subunit (Sulfurimonas denitrificans (strain ATCC 33889 / DSM 1251) (Thiomicrospira denitrificans (strain ATCC 33889 / DSM 1251))).